We begin with the raw amino-acid sequence, 572 residues long: Probable inactive glycosyltransferase 25 family member 3 (572 aa).

N-linked (GlcNAc...) asparagine glycosylation is found at Asn-52, Asn-130, Asn-214, and Asn-337. The Prevents secretion from ER motif lies at 569–572; that stretch reads RDEL.

Belongs to the glycosyltransferase 25 family.

It localises to the endoplasmic reticulum lumen. Its function is as follows. Probable cell adhesion protein involved in leukocyte transmigration across the blood-brain barrier. Does not express any beta-galactosyltransferase activity in vitro. This Rattus norvegicus (Rat) protein is Probable inactive glycosyltransferase 25 family member 3 (Cercam).